The sequence spans 328 residues: Ferredoxin--NADP reductase 1 (328 aa).

Residues aspartate 28, glutamine 36, tyrosine 41, alanine 81, isoleucine 116, aspartate 277, and serine 320 each coordinate FAD.

It belongs to the ferredoxin--NADP reductase type 2 family. As to quaternary structure, homodimer. FAD serves as cofactor.

It catalyses the reaction 2 reduced [2Fe-2S]-[ferredoxin] + NADP(+) + H(+) = 2 oxidized [2Fe-2S]-[ferredoxin] + NADPH. The protein is Ferredoxin--NADP reductase 1 of Sulfolobus acidocaldarius (strain ATCC 33909 / DSM 639 / JCM 8929 / NBRC 15157 / NCIMB 11770).